A 339-amino-acid polypeptide reads, in one-letter code: Putative phosphate acyltransferase (339 aa).

It belongs to the PlsX family. In terms of assembly, homodimer. Probably interacts with PlsY.

The protein resides in the cytoplasm. The catalysed reaction is a fatty acyl-[ACP] + phosphate = an acyl phosphate + holo-[ACP]. It participates in lipid metabolism; phospholipid metabolism. Functionally, catalyzes the reversible formation of acyl-phosphate (acyl-PO(4)) from acyl-[acyl-carrier-protein] (acyl-ACP). This enzyme utilizes acyl-ACP as fatty acyl donor, but not acyl-CoA. This Clostridium perfringens (strain 13 / Type A) protein is Putative phosphate acyltransferase.